A 1072-amino-acid chain; its full sequence is MSGRAVSNSQHAQQSFGSGPQLYRDVAELHAVPSPSHGALMDPSHFDDFAFAYQGLPDQPSLVSLADHAHAHASQSPTAFPQHQAMSGLAHNGLPFGALPAGNRSQSMDGSDAPPDRTSPASNALEDSTTDEFGLASRSRADATDLGGKPKEDKADATPAWSELKTKAGKERKRLPLACIACRRKKIRCSGEKPACKHCLRSRIPCVYKVTTRKAAPRTDYMAMLDKRLKRMEERIIKVIPKSDQEVASSVTRAVVKPAIPGTVPSNKPTKKRGAEEAFGPDLEAWAKAPSKPKIDGDDRPSSLQVQEAEENKLQHEGTEALPSKEIQEHLAEVFFDNIYGQSYHLLHKPSYMRKLKNGTLPPVLVLTVCAVAARFTSSPLVNSSGPEFLRGEEWASHARDICTRRYEWPNLTILTCLLILGLHEFGTCQGGRSWALGGQAIRMAFALQLHKDLEYDPSGRTGPKKQLSFIDREIRRRIMWACFLMDRFNSSGTDRPMFIREDTIQIPLPVKEKYFQFDMPAPTEMLDGQVPHPASPNDGQLADARENMGVAAFLIRAIALWGRIITYLSQGGKDLDPNPMWEDESQYVKHLNDVVNLEASLPSSLKYSAENLDVHKTENTASQFLFMHICLQHNILFVSRAAMSARKQQGVHDDFFSEASKRTFSAANQISELLREAEQSRCFVSAPFAGYCAFSSTTVHILGVISGNPNMKPTAEANLTTNVKYLHKMKKYWGMFHWMVENVRTQYRNALDAMRAGANLQDRAAQSSFLQYGDWFNRYPHGLSDAEFMDPATHKRKDSGADGVLEAKPELQSVEEYFSTLPTPQSVEHKDTIRAVGTKRKQSAKKQAGLPTQSGQHLESMQGTDADSVSGAQERRFSGGLGLPSNSYNPLAVSNAQNPAFSTAMSPMSPANMTAFSHHAHTPTFFPPELLAMNFGQGANGNIDPLDRQLVFGGYSLDASTGLGGGQDIMSGLDWDAVASGAHPDGGLQGRRSTAKAGMNGQAAGMADGAGLSGPEASSAWFMPFNMEPPEMGQDPGFNMGGIDPFTGVFGGGGSGLATPNALGGLQQQGP.

The segment at residues 179-206 is a DNA-binding region (zn(2)-C6 fungal-type); it reads CIACRRKKIRCSGEKPACKHCLRSRIPC.

It is found in the nucleus. Its function is as follows. Zn(2)-C6 fungal-type transcription factor that has a role in conidia production and also in plant colonization. Acts as a negative regulator of the production of macroconidia and is required for full virulence and the positive regulation of SIX effectors. In addition, FTF2 is also involved in the regulation of class II hydrophobins FOXG_02746 and FOXG_02748 likely required for plant colonization. This Fusarium oxysporum f. sp. lycopersici (strain 4287 / CBS 123668 / FGSC 9935 / NRRL 34936) (Fusarium vascular wilt of tomato) protein is Zn(2)-C6 fungal-type transcription factor FTF2.